The chain runs to 183 residues: Large ribosomal subunit protein uL6 (183 aa).

This sequence belongs to the universal ribosomal protein uL6 family. In terms of assembly, part of the 50S ribosomal subunit.

Its function is as follows. This protein binds to the 23S rRNA, and is important in its secondary structure. It is located near the subunit interface in the base of the L7/L12 stalk, and near the tRNA binding site of the peptidyltransferase center. In Moorella thermoacetica (strain ATCC 39073 / JCM 9320), this protein is Large ribosomal subunit protein uL6.